Consider the following 312-residue polypeptide: Ribonuclease Z (312 aa).

Residues His62, His64, Asp66, His67, His144, Asp215, and His273 each contribute to the Zn(2+) site. Asp66 functions as the Proton acceptor in the catalytic mechanism.

Belongs to the RNase Z family. In terms of assembly, homodimer. Zn(2+) serves as cofactor.

The catalysed reaction is Endonucleolytic cleavage of RNA, removing extra 3' nucleotides from tRNA precursor, generating 3' termini of tRNAs. A 3'-hydroxy group is left at the tRNA terminus and a 5'-phosphoryl group is left at the trailer molecule.. Zinc phosphodiesterase, which displays some tRNA 3'-processing endonuclease activity. Probably involved in tRNA maturation, by removing a 3'-trailer from precursor tRNA. The sequence is that of Ribonuclease Z from Prochlorococcus marinus (strain MIT 9515).